Reading from the N-terminus, the 87-residue chain is Large ribosomal subunit protein eL33 (87 aa).

Belongs to the eukaryotic ribosomal protein eL33 family.

The chain is Large ribosomal subunit protein eL33 from Pyrococcus woesei.